Here is a 237-residue protein sequence, read N- to C-terminus: Uridylate kinase (237 aa).

Lys-11–Gly-14 is an ATP binding site. Gly-53 contacts UMP. 2 residues coordinate ATP: Gly-54 and Arg-58. UMP is bound by residues Asp-73 and Thr-134–Thr-141. ATP-binding residues include Thr-161, Tyr-167, and Asp-170.

Belongs to the UMP kinase family. As to quaternary structure, homohexamer.

The protein localises to the cytoplasm. The catalysed reaction is UMP + ATP = UDP + ADP. It participates in pyrimidine metabolism; CTP biosynthesis via de novo pathway; UDP from UMP (UMPK route): step 1/1. Inhibited by UTP. Catalyzes the reversible phosphorylation of UMP to UDP. The polypeptide is Uridylate kinase (Burkholderia ambifaria (strain ATCC BAA-244 / DSM 16087 / CCUG 44356 / LMG 19182 / AMMD) (Burkholderia cepacia (strain AMMD))).